The sequence spans 1024 residues: Seizure 6-like protein (1024 aa).

The signal sequence occupies residues 1–28 (MPAARPPAAGLRGISLFLALLLGSPAAA). At 29 to 958 (LERDALPEGD…ETSLEGGNMA (930 aa)) the chain is on the extracellular side. Disordered regions lie at residues 33-77 (ALPE…SQSA), 108-184 (RPKH…EVPL), and 212-234 (AHTL…EAPQ). O-linked (GalNAc...) serine glycosylation is present at S49. Positions 56–66 (SPGKEHPEERV) are enriched in basic and acidic residues. Residues 110–120 (KHALPPKKKLP) show a composition bias toward basic residues. Over residues 138–162 (SAATVQRAGSQPASQGLDLLSSSTE) the composition is skewed to polar residues. 2 O-glycosylated at one site regions span residues 147 to 161 (SQPA…SSST) and 176 to 180 (SEEAS). Residues C281 and C308 are joined by a disulfide bond. Residues 281–389 (CSVSFSNPEG…GTFQLHYQAF (109 aa)) form the CUB 1 domain. N311, N328, and N350 each carry an N-linked (GlcNAc...) asparagine glycan. The Sushi 1 domain maps to 391–450 (LSCNFPRRPDSGDVTVMDLHSGGVAHFHCHLGYELQGAKMLTCINASKPHWSSQEPICSA). 2 cysteine pairs are disulfide-bonded: C393-C433 and C419-C448. N-linked (GlcNAc...) asparagine glycans are attached at residues N435, N458, N474, N514, N576, N618, N674, and N742. Positions 452-562 (CGGAVHNATI…STFNIRFEAF (111 aa)) constitute a CUB 2 domain. The 62-residue stretch at 565–626 (GHCYEPYIQN…WNDTEPLCRA (62 aa)) folds into the Sushi 2 domain. Disulfide bonds link C567–C609 and C594–C624. The CUB 3 domain occupies 628–739 (CGGELSAVAG…QGFIMNYIEV (112 aa)). 3 Sushi domains span residues 743-802 (DSCS…FCEK), 804-867 (MYCT…HCVS), and 871-932 (LACD…VCKV). Disulfide bonds link C745–C787, C773–C800, C806–C848, C834–C865, C873–C915, and C901–C930. The chain crosses the membrane as a helical span at residues 959–979 (LAIFIPVLIISLLLGGAYIYI). Residues 980 to 1024 (TRCRYYSNLRLPLMYSHPYSQITVETEFDNPIYETGETREYEVSI) lie on the Cytoplasmic side of the membrane.

It belongs to the SEZ6 family. In terms of processing, O-glycosylated. Widely expressed, including adult and fetal brains and lungs. Not expressed in all lung cancer cell lines.

The protein localises to the endoplasmic reticulum membrane. May contribute to specialized endoplasmic reticulum functions in neurons. The chain is Seizure 6-like protein (SEZ6L) from Homo sapiens (Human).